We begin with the raw amino-acid sequence, 61 residues long: Short neurotoxin 1 (61 aa).

Disulfide bonds link cysteine 3/cysteine 23, cysteine 17/cysteine 40, cysteine 42/cysteine 53, and cysteine 54/cysteine 59.

Belongs to the three-finger toxin family. Short-chain subfamily. Type I alpha-neurotoxin sub-subfamily. In terms of tissue distribution, expressed by the venom gland.

The protein localises to the secreted. Functionally, binds to muscle nicotinic acetylcholine receptor (nAChR) and inhibit acetylcholine from binding to the receptor, thereby impairing neuromuscular transmission. This chain is Short neurotoxin 1, found in Naja annulata annulata (Banded water cobra).